We begin with the raw amino-acid sequence, 133 residues long: Glycine cleavage system H protein (133 aa).

Residues 30-112 (TITVGITHHA…YGAGWFFKIK (83 aa)) enclose the Lipoyl-binding domain. Lysine 71 carries the N6-lipoyllysine modification.

The protein belongs to the GcvH family. As to quaternary structure, the glycine cleavage system is composed of four proteins: P, T, L and H. Requires (R)-lipoate as cofactor.

Its function is as follows. The glycine cleavage system catalyzes the degradation of glycine. The H protein shuttles the methylamine group of glycine from the P protein to the T protein. This is Glycine cleavage system H protein from Neisseria gonorrhoeae (strain ATCC 700825 / FA 1090).